Here is a 509-residue protein sequence, read N- to C-terminus: ATP synthase subunit alpha (509 aa).

169 to 176 lines the ATP pocket; the sequence is GDRQTGKT.

Belongs to the ATPase alpha/beta chains family. F-type ATPases have 2 components, CF(1) - the catalytic core - and CF(0) - the membrane proton channel. CF(1) has five subunits: alpha(3), beta(3), gamma(1), delta(1), epsilon(1). CF(0) has three main subunits: a(1), b(2) and c(9-12). The alpha and beta chains form an alternating ring which encloses part of the gamma chain. CF(1) is attached to CF(0) by a central stalk formed by the gamma and epsilon chains, while a peripheral stalk is formed by the delta and b chains.

The protein resides in the cell inner membrane. It carries out the reaction ATP + H2O + 4 H(+)(in) = ADP + phosphate + 5 H(+)(out). In terms of biological role, produces ATP from ADP in the presence of a proton gradient across the membrane. The alpha chain is a regulatory subunit. This Brucella suis biovar 1 (strain 1330) protein is ATP synthase subunit alpha.